The primary structure comprises 39 residues: Large ribosomal subunit protein bL36 (39 aa).

Belongs to the bacterial ribosomal protein bL36 family.

The sequence is that of Large ribosomal subunit protein bL36 from Oenococcus oeni (strain ATCC BAA-331 / PSU-1).